The chain runs to 156 residues: Oxidized purine nucleoside triphosphate hydrolase (156 aa).

The Nudix hydrolase domain occupies 3–132; it reads ASRLYTLVLV…WFPLLLQKKK (130 aa). Residue Thr-8 participates in 2-oxo-dATP binding. 8-oxo-dGMP is bound by residues Thr-8 and Lys-23. Residues Thr-8 and Lys-23 each coordinate 8-oxo-dGTP. N(6)-methyl-AMP contacts are provided by Thr-8 and Lys-23. Thr-8 and Lys-23 together coordinate O(6)-methyl-dGMP. Phe-27 contributes to the 8-oxo-ATP binding site. Residues Asn-33 and 35–38 each bind 2-oxo-dATP; that span reads FGGK. Asn-33 contributes to the 8-oxo-dGMP binding site. 8-oxo-dGTP is bound by residues Asn-33 and 35–38; that span reads FGGK. Residue Asn-33 coordinates O(6)-methyl-dGMP. 8-oxo-ATP-binding positions include 35–38 and Glu-52; that span reads FGGK. The Mg(2+) site is built by Gly-36, Glu-52, Glu-55, Glu-56, and Glu-100. The Nudix box motif lies at 37 to 58; it reads GKVQEGETIEDGARRELQEESG. Glu-56 is an 8-oxo-ATP binding site. 117–120 lines the 2-oxo-dATP pocket; it reads WPDD. 117 to 120 lines the 8-oxo-dGMP pocket; that stretch reads WPDD. Residue 117–120 coordinates 8-oxo-dGTP; sequence WPDD. 117–120 contributes to the N(6)-methyl-AMP binding site; the sequence is WPDD. 117 to 120 is an O(6)-methyl-dGMP binding site; sequence WPDD. 8-oxo-ATP is bound at residue 117-120; it reads WPDD.

The protein belongs to the Nudix hydrolase family. In terms of assembly, monomer. Mg(2+) serves as cofactor. Post-translationally, the N-terminus is blocked. Widely expressed with highest expression in thymus, testis, embryo and proliferating blood lymphocytes.

It localises to the cytoplasm. Its subcellular location is the cytosol. The protein resides in the mitochondrion matrix. It is found in the nucleus. It catalyses the reaction 2-oxo-dATP + H2O = 2-oxo-dAMP + diphosphate + H(+). It carries out the reaction 2-oxo-ATP + H2O = 2-oxo-AMP + diphosphate + H(+). The catalysed reaction is 8-oxo-dGTP + H2O = 8-oxo-dGMP + diphosphate + H(+). The enzyme catalyses 8-oxo-dATP + H2O = 8-oxo-dAMP + diphosphate + H(+). It catalyses the reaction O(6)-methyl-dGTP + H2O = O(6)-methyl-dGMP + diphosphate + H(+). It carries out the reaction N(6)-methyl-dATP + H2O = N(6)-methyl-dAMP + diphosphate + H(+). The catalysed reaction is N(6)-methyl-ATP + H2O = N(6)-methyl-AMP + diphosphate + H(+). With respect to regulation, inhibited by 2-oxo-dADP and 8-oxo-dGDP. In terms of biological role, oxidized purine nucleoside triphosphate hydrolase which is a prominent sanitizer of the oxidized nucleotide pool. Catalyzes the hydrolysis of 2-oxo-dATP (2-hydroxy-dATP) into 2-oxo-dAMP. Also has a significant hydrolase activity toward 2-oxo-ATP, 8-oxo-dGTP and 8-oxo-dATP. Through the hydrolysis of oxidized purine nucleoside triphosphates, prevents their incorporation into DNA and the subsequent transversions A:T to C:G and G:C to T:A. Also catalyzes the hydrolysis of methylated purine nucleoside triphosphate preventing their integration into DNA. Through this antimutagenic activity protects cells from oxidative stress. The chain is Oxidized purine nucleoside triphosphate hydrolase (NUDT1) from Homo sapiens (Human).